The primary structure comprises 94 residues: Trp operon repressor homolog (94 aa).

A DNA-binding region spans residues 58–81 (QREIAEKYGVSIAQITRGSNALKG).

It belongs to the TrpR family. In terms of assembly, homodimer.

The protein resides in the cytoplasm. This protein is an aporepressor. When complexed with L-tryptophan it binds the operator region of the trp operon and prevents the initiation of transcription. The chain is Trp operon repressor homolog from Chlamydia trachomatis serovar L2 (strain ATCC VR-902B / DSM 19102 / 434/Bu).